Reading from the N-terminus, the 143-residue chain is Transcriptional regulator MraZ (143 aa).

2 consecutive SpoVT-AbrB domains span residues 5–47 (TFTP…PREE) and 76–119 (ADEQ…DAQA).

Belongs to the MraZ family. As to quaternary structure, forms oligomers.

Its subcellular location is the cytoplasm. It is found in the nucleoid. This Corynebacterium urealyticum (strain ATCC 43042 / DSM 7109) protein is Transcriptional regulator MraZ.